Consider the following 251-residue polypeptide: 2,3-bisphosphoglycerate-dependent phosphoglycerate mutase (251 aa).

Residues 13-20 (RHGESEWN), 26-27 (TG), arginine 65, 92-95 (ERHY), lysine 103, 119-120 (RR), and 186-187 (GN) contribute to the substrate site. Residue histidine 14 is the Tele-phosphohistidine intermediate of the active site. Residue glutamate 92 is the Proton donor/acceptor of the active site.

The protein belongs to the phosphoglycerate mutase family. BPG-dependent PGAM subfamily.

The catalysed reaction is (2R)-2-phosphoglycerate = (2R)-3-phosphoglycerate. The protein operates within carbohydrate degradation; glycolysis; pyruvate from D-glyceraldehyde 3-phosphate: step 3/5. Its function is as follows. Catalyzes the interconversion of 2-phosphoglycerate and 3-phosphoglycerate. The polypeptide is 2,3-bisphosphoglycerate-dependent phosphoglycerate mutase (Rhodococcus opacus (strain B4)).